The primary structure comprises 154 residues: SsrA-binding protein (154 aa).

The protein belongs to the SmpB family.

It is found in the cytoplasm. Functionally, required for rescue of stalled ribosomes mediated by trans-translation. Binds to transfer-messenger RNA (tmRNA), required for stable association of tmRNA with ribosomes. tmRNA and SmpB together mimic tRNA shape, replacing the anticodon stem-loop with SmpB. tmRNA is encoded by the ssrA gene; the 2 termini fold to resemble tRNA(Ala) and it encodes a 'tag peptide', a short internal open reading frame. During trans-translation Ala-aminoacylated tmRNA acts like a tRNA, entering the A-site of stalled ribosomes, displacing the stalled mRNA. The ribosome then switches to translate the ORF on the tmRNA; the nascent peptide is terminated with the 'tag peptide' encoded by the tmRNA and targeted for degradation. The ribosome is freed to recommence translation, which seems to be the essential function of trans-translation. The protein is SsrA-binding protein of Solidesulfovibrio magneticus (strain ATCC 700980 / DSM 13731 / RS-1) (Desulfovibrio magneticus).